The chain runs to 90 residues: Probable Fe(2+)-trafficking protein (90 aa).

This sequence belongs to the Fe(2+)-trafficking protein family.

Its function is as follows. Could be a mediator in iron transactions between iron acquisition and iron-requiring processes, such as synthesis and/or repair of Fe-S clusters in biosynthetic enzymes. In Pseudomonas entomophila (strain L48), this protein is Probable Fe(2+)-trafficking protein.